Here is a 425-residue protein sequence, read N- to C-terminus: Enolase (425 aa).

Q163 is a (2R)-2-phosphoglycerate binding site. The active-site Proton donor is E205. Residues D242, E285, and D312 each contribute to the Mg(2+) site. 4 residues coordinate (2R)-2-phosphoglycerate: K337, R366, S367, and K388. K337 acts as the Proton acceptor in catalysis.

This sequence belongs to the enolase family. The cofactor is Mg(2+).

The protein resides in the cytoplasm. It localises to the secreted. It is found in the cell surface. The enzyme catalyses (2R)-2-phosphoglycerate = phosphoenolpyruvate + H2O. The protein operates within carbohydrate degradation; glycolysis; pyruvate from D-glyceraldehyde 3-phosphate: step 4/5. Catalyzes the reversible conversion of 2-phosphoglycerate (2-PG) into phosphoenolpyruvate (PEP). It is essential for the degradation of carbohydrates via glycolysis. In Rhodospirillum rubrum (strain ATCC 11170 / ATH 1.1.1 / DSM 467 / LMG 4362 / NCIMB 8255 / S1), this protein is Enolase.